A 310-amino-acid chain; its full sequence is Carbamate kinase 1 (310 aa).

This sequence belongs to the carbamate kinase family.

It localises to the cytoplasm. The catalysed reaction is hydrogencarbonate + NH4(+) + ATP = carbamoyl phosphate + ADP + H2O + H(+). It functions in the pathway metabolic intermediate metabolism; carbamoyl phosphate degradation; CO(2) and NH(3) from carbamoyl phosphate: step 1/1. This is Carbamate kinase 1 (arcC1) from Staphylococcus epidermidis (strain ATCC 12228 / FDA PCI 1200).